Reading from the N-terminus, the 293-residue chain is MMRIALFLITNLAVMLVFGLVLSLTGIQSSSVQGLMIMAGLFGFGGAFVSLLMSKWMALRSVGGEVIEQPRNETERWLVETVRSQSQQAGIAMPQVAIYHAPDINAFATGARRDASLVAVSTGLLQNMSRDEAEAVIAHEISHIANGDMVTMTLVQGIVNTFVIFISRLIAQVVSGFLSGNRDEGESSNGNPMVYFAVATVLELVFGILASIITMWFSRYREFHADAGSAKLVGREKMIAALQRLKTSYEPQEEGSMMAFCINGKSKSFSELFMSHPPLDKRIEALRSGEYLK.

A run of 2 helical transmembrane segments spans residues 4 to 24 (IALFLITNLAVMLVFGLVLSL) and 34 to 54 (GLMIMAGLFGFGGAFVSLLMS). His139 is a binding site for Zn(2+). Residue Glu140 is part of the active site. His143 contributes to the Zn(2+) binding site. The next 2 membrane-spanning stretches (helical) occupy residues 158-178 (IVNTFVIFISRLIAQVVSGFL) and 193-213 (MVYFAVATVLELVFGILASII). Glu222 contributes to the Zn(2+) binding site.

This sequence belongs to the peptidase M48B family. Requires Zn(2+) as cofactor.

The protein resides in the cell inner membrane. The sequence is that of Protease HtpX from Pectobacterium atrosepticum (strain SCRI 1043 / ATCC BAA-672) (Erwinia carotovora subsp. atroseptica).